The following is an 864-amino-acid chain: MTSAELRKAFLDFFVKQGHTAVHSSPVVPGNDPTLLFTNAGMVQFKETFLGQETREYKRATSVQRCIRAGGKHNDLENVGYTARHHTFFEMLGNFSFGDYFKREAIQYAWTFLTEELGLPEEKLWITVFEEDREAEDIWLKEMGVSAERFSRCGAKDNFWSMGDTGPCGPCSEIFYDHGADVAGGPPGSPDEDGDRYIEIWNLVFMQFDRSEDGTLTPLPKPSVDTGMGLERLAAVMQNQHNNYDIDLFQAIVKKASELTGEKDLANSSLRVIADHIRSCAFMVVDGVLPSNEGRGYVLRRIIRRAIRHGYKLGQTDIFFYQLVPTLVEQMGEAYPELVKEQANVERALKLEEERFAETLENGMKILEEDIAQLSGSVISGSTAFKLYDTYGFPLDLTADVARERNLSVDEAGFEQEMEAQRARARSASNFGAQSKNKVDYTGSTHFIGYEQDEAEAEIAAIFVDNVSVEKASEGQEAIVILNQTPFYAESGGQVGDQGSLTEGMNSFHVDNCQKQGAAFLHIGKVTAGSISVGQTILAHIDVKARRASERNHSATHLLHAALRTVLGTHVGQKGSLVQPERLRFDFSHFEPISAEQLLEIEQLVNHNIMLNAQVMMEEMDIEAAKAKGAMALFGEKYGDVVRVVDMGDFSIELCGGTHVNWTGEIGPFRITSESGIASGVRRIEAVTGEAAWQTIYDMEKSLLNIAANLKTDKPQVESKVAQLVTEQKELEKQLKQLQSKLASSQGDDLASSVTEVNGVNVLAAELEGADVNTLRETLDKLRDKLEPAAIVLAAVDGDKVSLVAGVSKSITGNVKAGELVNHVAQQVGGKGGGRPDMAQAGGKDPSKLKEALASVKEWVATVA.

Residues histidine 553, histidine 557, cysteine 655, and histidine 659 each coordinate Zn(2+). The tract at residues 828-847 (VGGKGGGRPDMAQAGGKDPS) is disordered.

This sequence belongs to the class-II aminoacyl-tRNA synthetase family. Zn(2+) is required as a cofactor.

The protein resides in the cytoplasm. It catalyses the reaction tRNA(Ala) + L-alanine + ATP = L-alanyl-tRNA(Ala) + AMP + diphosphate. Catalyzes the attachment of alanine to tRNA(Ala) in a two-step reaction: alanine is first activated by ATP to form Ala-AMP and then transferred to the acceptor end of tRNA(Ala). Also edits incorrectly charged Ser-tRNA(Ala) and Gly-tRNA(Ala) via its editing domain. The sequence is that of Alanine--tRNA ligase from Hydrogenovibrio crunogenus (strain DSM 25203 / XCL-2) (Thiomicrospira crunogena).